A 522-amino-acid chain; its full sequence is L-tyrosine/L-DOPA decarboxylase 2 (522 aa).

Repeat copies occupy residues 75–132 (KDVH…TELE) and 135–186 (VMDW…GREH). The tract at residues 75 to 186 (KDVHDDIVPG…RILDRIGREH (112 aa)) is 2 X approximate tandem repeats. 4 residues coordinate pyridoxal 5'-phosphate: threonine 163, cysteine 164, threonine 258, and asparagine 312. Lysine 315 bears the N6-(pyridoxal phosphate)lysine mark.

It belongs to the group II decarboxylase family. It depends on pyridoxal 5'-phosphate as a cofactor. In terms of tissue distribution, strongly expressed in all tissues, particularly in thick roots.

The enzyme catalyses L-tyrosine + H(+) = tyramine + CO2. It carries out the reaction L-dopa + H(+) = dopamine + CO2. The protein operates within aromatic compound metabolism. It participates in alkaloid biosynthesis. Aromatic amino acid decarboxylase participating in the biosynthesis of natural products derived from phenylethylamine, including mescaline, a natural hallucinogen potentially used in psychotherapeutic treatments. Catalyzes the decarboxylation of L-tyrosine and L-DOPA. The sequence is that of L-tyrosine/L-DOPA decarboxylase 2 from Lophophora williamsii (Peyote).